The following is a 592-amino-acid chain: Glutamine--fructose-6-phosphate aminotransferase [isomerizing] (592 aa).

Cys-2 functions as the Nucleophile; for GATase activity in the catalytic mechanism. One can recognise a Glutamine amidotransferase type-2 domain in the interval 2–217 (CGIVGYVGRD…DGEIADLTPD (216 aa)). SIS domains lie at 277–416 (IPFK…EREN) and 441–582 (VAEK…VDQP). The active-site For Fru-6P isomerization activity is the Lys-587.

As to quaternary structure, homodimer.

It localises to the cytoplasm. The catalysed reaction is D-fructose 6-phosphate + L-glutamine = D-glucosamine 6-phosphate + L-glutamate. Functionally, catalyzes the first step in hexosamine metabolism, converting fructose-6P into glucosamine-6P using glutamine as a nitrogen source. The sequence is that of Glutamine--fructose-6-phosphate aminotransferase [isomerizing] from Aquifex aeolicus (strain VF5).